The sequence spans 1108 residues: Topless-related protein 3 (1108 aa).

A LisH domain is found at 4 to 36 (LSRELVFLILQFLEEEKFKESVHRLEKESGFFF). Residues 34 to 92 (FFFNTKYFDEKVLAGEWDDVETYLSGFTKVDDNRYSMKIFFEIRKQKYLEALDRQEKAK) form the CTLH domain. Residue Ser-214 is modified to Phosphoserine. 6 WD repeats span residues 343–383 (HQGS…RLVS), 405–444 (ETPISVTRVAWSPDGNFIGVAFTKHLIQLYAFSGPNDLRQ), 450–491 (AHVG…HFTF), 493–534 (GHDA…SRVD), 583–623 (EFQK…VLTS), and 628–667 (GGLPALPHLRFNKDGNLLAVTTADNGFKILANPAGFRSLR). The segment at 706-725 (HSQMLNGVDPSKSRIDDSTD) is disordered. The segment covering 716–725 (SKSRIDDSTD) has biased composition (basic and acidic residues). 5 WD repeats span residues 751 to 790 (GSSTKVVQLLYTNSGAGILALGSNGIQRLWKWVPNEQNPS), 818 to 856 (NLENAAPCIALSKNDSYVMSAAGGKVSLFNMMTFKVMTT), 859 to 899 (PPPP…VKSK), 902 to 941 (GHQKRITGLAFSTALNILVSSGADAQICFWSIDTWEKRKS), and 994 to 1033 (SLSAPISSAVYACNSQLIYTTFRDGNIGVFDADSLRLRCR). A disordered region spans residues 1084 to 1108 (GMIPPSEAINSPSTTSNQTPEQLQR). Residues 1091 to 1108 (AINSPSTTSNQTPEQLQR) show a composition bias toward polar residues.

Tetramer. Interacts with NINJA/AFPH2. Interacts with SMXL6. Interacts with SPL (via EAR motif). Interacts with SPEAR3/TIE1.

It localises to the nucleus. Functionally, transcriptional corepressor. Negative regulator of jasmonate responses. The sequence is that of Topless-related protein 3 (TPR3) from Arabidopsis thaliana (Mouse-ear cress).